We begin with the raw amino-acid sequence, 69 residues long: uncharacterized protein (69 aa).

The next 2 helical transmembrane spans lie at Leu-15–Val-35 and Leu-36–Thr-56.

It localises to the cell membrane. This is an uncharacterized protein from Methanocaldococcus jannaschii (strain ATCC 43067 / DSM 2661 / JAL-1 / JCM 10045 / NBRC 100440) (Methanococcus jannaschii).